The chain runs to 755 residues: Exocyst complex component 3 (755 aa).

Lysine 38 bears the N6-acetyllysine mark.

The protein belongs to the SEC6 family. As to quaternary structure, the exocyst complex is composed of EXOC1, EXOC2, EXOC3, EXOC4, EXOC5, EXOC6, EXOC7 and EXOC8. Interacts with EXOC3L1. Interacts with BIRC6/bruce. Interacts with MYRIP. Interacts with SLC6A9.

The protein resides in the cytoplasm. The protein localises to the perinuclear region. It is found in the cell projection. Its subcellular location is the growth cone. It localises to the midbody. The protein resides in the golgi apparatus. The protein localises to the neuron projection. In terms of biological role, component of the exocyst complex involved in the docking of exocytic vesicles with fusion sites on the plasma membrane. This chain is Exocyst complex component 3 (Exoc3), found in Mus musculus (Mouse).